Here is a 379-residue protein sequence, read N- to C-terminus: Alcohol dehydrogenase class-3 (379 aa).

N-acetylserine is present on Ser-2. Residues Cys-48, His-70, Cys-100, Cys-103, Cys-106, Cys-114, and Cys-177 each coordinate Zn(2+).

This sequence belongs to the zinc-containing alcohol dehydrogenase family. Class-III subfamily. It depends on Zn(2+) as a cofactor.

It catalyses the reaction a primary alcohol + NAD(+) = an aldehyde + NADH + H(+). The enzyme catalyses a secondary alcohol + NAD(+) = a ketone + NADH + H(+). The catalysed reaction is S-(hydroxymethyl)glutathione + NADP(+) = S-formylglutathione + NADPH + H(+). It carries out the reaction S-(hydroxymethyl)glutathione + NAD(+) = S-formylglutathione + NADH + H(+). It catalyses the reaction octan-1-ol + NAD(+) = octanal + NADH + H(+). In terms of biological role, class-III ADH is remarkably ineffective in oxidizing ethanol, but it readily catalyzes the oxidation of long-chain primary alcohols and the oxidation of S-(hydroxymethyl) glutathione. In Drosophila melanogaster (Fruit fly), this protein is Alcohol dehydrogenase class-3 (Fdh).